We begin with the raw amino-acid sequence, 217 residues long: GTP cyclohydrolase 1 (217 aa).

Zn(2+) contacts are provided by Cys109, His112, and Cys180.

This sequence belongs to the GTP cyclohydrolase I family. In terms of assembly, toroid-shaped homodecamer, composed of two pentamers of five dimers.

The catalysed reaction is GTP + H2O = 7,8-dihydroneopterin 3'-triphosphate + formate + H(+). It participates in cofactor biosynthesis; 7,8-dihydroneopterin triphosphate biosynthesis; 7,8-dihydroneopterin triphosphate from GTP: step 1/1. This Vibrio vulnificus (strain CMCP6) protein is GTP cyclohydrolase 1.